Consider the following 81-residue polypeptide: Large ribosomal subunit protein bL31B (81 aa).

Belongs to the bacterial ribosomal protein bL31 family. Type B subfamily. Part of the 50S ribosomal subunit.

This Lactobacillus acidophilus (strain ATCC 700396 / NCK56 / N2 / NCFM) protein is Large ribosomal subunit protein bL31B.